Here is a 314-residue protein sequence, read N- to C-terminus: MIEIEKPKIETVEISDDAKFGKFVVEPLERGYGTTLGNSLRRILLSSLPGAAVTSIQIDGVLHEFSTIEGVVEDVTTIILHIKKLALKIYSDEEKTLEIDVQGEGTVTAADITHDSDVEILNPDLHIATLGENASFRVRLTAQRGRGYTPADANKRDDQPIGVIPIDSIYTPVSRVSYQVENTRVGQVANYDKLTLDVWTDGSTGPKEAIALGSKILTEHLNIFVGLTDEAQHAEIMVEKEEDQKEKVLEMTIEELDLSVRSYNCLKRAGINTVQELANKTEEDMMKVRNLGRKSLEEVKAKLEELGLGLRKDD.

An alpha N-terminal domain (alpha-NTD) region spans residues 1–228; sequence MIEIEKPKIE…EHLNIFVGLT (228 aa). Positions 245–314 are alpha C-terminal domain (alpha-CTD); that stretch reads KEKVLEMTIE…ELGLGLRKDD (70 aa).

This sequence belongs to the RNA polymerase alpha chain family. In terms of assembly, homodimer. RNAP is composed of a core of 2 alpha, a beta and a beta' subunit. The core is associated with a delta subunit, and at least one of epsilon or omega. When a sigma factor is associated with the core the holoenzyme is formed, which can initiate transcription.

The enzyme catalyses RNA(n) + a ribonucleoside 5'-triphosphate = RNA(n+1) + diphosphate. Its function is as follows. DNA-dependent RNA polymerase catalyzes the transcription of DNA into RNA using the four ribonucleoside triphosphates as substrates. The sequence is that of DNA-directed RNA polymerase subunit alpha from Bacillus subtilis (strain 168).